A 157-amino-acid polypeptide reads, in one-letter code: Protein Smg homolog (157 aa).

This sequence belongs to the Smg family.

The protein is Protein Smg homolog of Shewanella sediminis (strain HAW-EB3).